The chain runs to 651 residues: Acetyl-coenzyme A synthetase (651 aa).

CoA contacts are provided by residues R190–K193 and T311. ATP is bound by residues G387–P389, D411–T416, D508, and R523. CoA is bound at residue S531. R534 contacts ATP. Mg(2+) contacts are provided by V545, H547, and V550. An N6-acetyllysine modification is found at K617.

Belongs to the ATP-dependent AMP-binding enzyme family. Mg(2+) serves as cofactor. Acetylated. Deacetylation by the SIR2-homolog deacetylase activates the enzyme.

It carries out the reaction acetate + ATP + CoA = acetyl-CoA + AMP + diphosphate. In terms of biological role, catalyzes the conversion of acetate into acetyl-CoA (AcCoA), an essential intermediate at the junction of anabolic and catabolic pathways. AcsA undergoes a two-step reaction. In the first half reaction, AcsA combines acetate with ATP to form acetyl-adenylate (AcAMP) intermediate. In the second half reaction, it can then transfer the acetyl group from AcAMP to the sulfhydryl group of CoA, forming the product AcCoA. The chain is Acetyl-coenzyme A synthetase from Mycobacterium bovis (strain ATCC BAA-935 / AF2122/97).